Here is a 608-residue protein sequence, read N- to C-terminus: UvrABC system protein C (608 aa).

The GIY-YIG domain maps to 16-94 (NRPGVYRMFD…IKEWRPPYNI (79 aa)). The region spanning 204–239 (NALADELNVGMEQAAMRLDFEKAAELRDQVAILRRV) is the UVR domain.

The protein belongs to the UvrC family. As to quaternary structure, interacts with UvrB in an incision complex.

The protein resides in the cytoplasm. In terms of biological role, the UvrABC repair system catalyzes the recognition and processing of DNA lesions. UvrC both incises the 5' and 3' sides of the lesion. The N-terminal half is responsible for the 3' incision and the C-terminal half is responsible for the 5' incision. The sequence is that of UvrABC system protein C from Pseudomonas aeruginosa (strain LESB58).